An 88-amino-acid polypeptide reads, in one-letter code: Large ribosomal subunit protein bL27 (88 aa).

The protein belongs to the bacterial ribosomal protein bL27 family.

This Mycolicibacterium smegmatis (strain ATCC 700084 / mc(2)155) (Mycobacterium smegmatis) protein is Large ribosomal subunit protein bL27.